Reading from the N-terminus, the 695-residue chain is Rho-related BTB domain-containing protein 1 (695 aa).

Residues 1 to 210 are rho-like; the sequence is MDSDMDYERP…DNAIRAALIS (210 aa). GTP-binding positions include 21-28, 84-88, and 140-143; these read GDNAVGKT, DTFGD, and CQLD. BTB domains are found at residues 266–426 and 484–551; these read ADVL…DEKE and SDVT…SPNL. Residues 325–351 are disordered; that stretch reads SLGSAEEGKEGPQRTPQADPGASSGQD.

It belongs to the small GTPase superfamily. Rho family. In terms of tissue distribution, highest expression in heart and testis.

This Mus musculus (Mouse) protein is Rho-related BTB domain-containing protein 1 (Rhobtb1).